The primary structure comprises 447 residues: Putative branched-chain amino acid carrier protein SSP1343 (447 aa).

12 consecutive transmembrane segments (helical) span residues 6–26 (WIIG…IFPP), 40–60 (ILAF…VGAL), 74–94 (PKFS…LFAI), 116–136 (LALF…CINP), 143–163 (IGSL…VKGF), 192–212 (GYLT…VNAV), 228–248 (LMAG…LGYI), 289–309 (LLGI…VVAV), 324–344 (IYVI…LNSV), 349–369 (VPVL…ILLA), 381–401 (IPVA…QGWI), and 416–436 (LEWF…AAMV).

The protein belongs to the branched chain amino acid transporter family.

It is found in the cell membrane. Its function is as follows. Component of the transport system for branched-chain amino acids (leucine, isoleucine and valine), which is coupled to a proton motive force. The protein is Putative branched-chain amino acid carrier protein SSP1343 of Staphylococcus saprophyticus subsp. saprophyticus (strain ATCC 15305 / DSM 20229 / NCIMB 8711 / NCTC 7292 / S-41).